We begin with the raw amino-acid sequence, 283 residues long: Pantothenate synthetase (283 aa).

Position 30 to 37 (30 to 37) interacts with ATP; it reads MGCLHEGH. His37 functions as the Proton donor in the catalytic mechanism. Gln61 lines the (R)-pantoate pocket. Gln61 provides a ligand contact to beta-alanine. 147 to 150 is an ATP binding site; the sequence is GQKD. Gln153 is a binding site for (R)-pantoate. Residues Val176 and 184-187 contribute to the ATP site; that span reads KSSR.

This sequence belongs to the pantothenate synthetase family. In terms of assembly, homodimer.

Its subcellular location is the cytoplasm. It catalyses the reaction (R)-pantoate + beta-alanine + ATP = (R)-pantothenate + AMP + diphosphate + H(+). It participates in cofactor biosynthesis; (R)-pantothenate biosynthesis; (R)-pantothenate from (R)-pantoate and beta-alanine: step 1/1. Its function is as follows. Catalyzes the condensation of pantoate with beta-alanine in an ATP-dependent reaction via a pantoyl-adenylate intermediate. This chain is Pantothenate synthetase, found in Clostridium novyi (strain NT).